The primary structure comprises 95 residues: uncharacterized protein (95 aa).

A helical membrane pass occupies residues 3–23 (FVIIIAILLLGISLILAFTVL).

Its subcellular location is the membrane. This is an uncharacterized protein from Methanocaldococcus jannaschii (strain ATCC 43067 / DSM 2661 / JAL-1 / JCM 10045 / NBRC 100440) (Methanococcus jannaschii).